The sequence spans 80 residues: LSM complex subunit lsm5 (80 aa).

Residues 6-79 (LPLELIDKCI…MCMLIPGGKP (74 aa)) enclose the Sm domain.

It belongs to the snRNP Sm proteins family. Component of the heptameric LSM1-LSM7 complex that forms a seven-membered ring structure with a donut shape. The LSm subunits are arranged in the order lsm1, lsm2, lsm3, lsm6, lsm5, lsm7 and lsm4. Component of the heptameric LSM2-LSM8 complex that forms a seven-membered ring structure with a donut shape. The LSm subunits are arranged in the order lsm8, lsm2, lsm3, lsm6, lsm5, lsm7 and lsm4.

The protein resides in the nucleus. Functionally, component of LSm protein complexes, which are involved in RNA processing and may function in a chaperone-like manner. Component of the cytoplasmic LSM1-LSM7 complex which is involved in mRNA degradation by activating the decapping step. The LSM1-LSM7 complex loads onto the 3'-end of single stranded RNA. Component of the nuclear LSM2-LSM8 complex, which is involved in spliceosome assembly. The LSM2-LSM8 complex plays a role in the biogenesis of the spliceosomal U4/U6-U5 tri-snRNP complex by accelerating prp24-mediated annealing of U4/U6 di-snRNA. The LSM2-LSM8 complex binds U6 snRNA terminating with a cyclic 2',3' phosphate group; RNA with an unmodified 3' hydroxyl or non-cyclic 3' phosphate is bound less tightly. This Schizosaccharomyces pombe (strain 972 / ATCC 24843) (Fission yeast) protein is LSM complex subunit lsm5 (lsm5).